Here is an 809-residue protein sequence, read N- to C-terminus: WD repeat protein iqw1 (809 aa).

WD repeat units follow at residues 43–82 (GHTG…KPRH), 87–128 (GHVQ…EGGM), 141–180 (CALD…VCNQ), 193–233 (PYRI…KSFR), and 241–295 (SPEK…LFHV). Residues 599–644 (SMYTGHSDLNDDDDDYQDEESYSYASDDDDESDEDSDEGPTLLSLR) form a disordered region. The span at 608–636 (NDDDDDYQDEESYSYASDDDDESDEDSDE) shows a compositional bias: acidic residues. WD repeat units follow at residues 668–708 (CNVE…ILAI) and 711–750 (GDSE…PSGC).

Interacts with ddb1.

Its subcellular location is the cytoplasm. Ligand-dependent coactivator of nuclear receptors that may function as a substrate receptor for CUL4-DDB1 E3 ubiquitin-protein ligase complex. This chain is WD repeat protein iqw1 (iqw1), found in Schizosaccharomyces pombe (strain 972 / ATCC 24843) (Fission yeast).